A 175-amino-acid chain; its full sequence is MSERIILDDAAIQRTITRIAHEILEYNKGTKDLVLLGIKTRGAFLAHRIQDKINSIEQQLVPTGTIDITHFRDDVDKVVQQADQRAFDINVDINNKVVVIIDDVLYTGRTVRASLDAILLHTRPIKIGLAALVDRGHRELPIRADFVGKNIPTARDESVSVYLEEIDDRNAVVIE.

Residues Thr-40–Arg-41, Arg-85, Asp-102–Thr-110, Arg-135, and Val-159 each bind substrate. The PRPP-binding signature appears at Val-98 to Thr-110.

It belongs to the purine/pyrimidine phosphoribosyltransferase family. PyrR subfamily. Homodimer and homohexamer; in equilibrium.

It carries out the reaction UMP + diphosphate = 5-phospho-alpha-D-ribose 1-diphosphate + uracil. Its function is as follows. Regulates transcriptional attenuation of the pyrimidine nucleotide (pyr) operon by binding in a uridine-dependent manner to specific sites on pyr mRNA. This disrupts an antiterminator hairpin in the RNA and favors formation of a downstream transcription terminator, leading to a reduced expression of downstream genes. In terms of biological role, also displays a weak uracil phosphoribosyltransferase activity which is not physiologically significant. In Staphylococcus epidermidis (strain ATCC 35984 / DSM 28319 / BCRC 17069 / CCUG 31568 / BM 3577 / RP62A), this protein is Bifunctional protein PyrR.